Reading from the N-terminus, the 70-residue chain is MIFKVFYQEKLTEVPVRENTKVLYLEATSEKDVRTKLNKFAYNIEFVQSVTGAHLEYEKENADLTLAEIV.

Belongs to the RNA polymerase subunit epsilon family. RNAP is composed of a core of 2 alpha, a beta and a beta' subunit. The core is associated with a delta subunit, and at least one of epsilon or omega. When a sigma factor is associated with the core the holoenzyme is formed, which can initiate transcription.

The catalysed reaction is RNA(n) + a ribonucleoside 5'-triphosphate = RNA(n+1) + diphosphate. Its function is as follows. A non-essential component of RNA polymerase (RNAP). The polypeptide is DNA-directed RNA polymerase subunit epsilon (Bacillus cereus (strain ATCC 14579 / DSM 31 / CCUG 7414 / JCM 2152 / NBRC 15305 / NCIMB 9373 / NCTC 2599 / NRRL B-3711)).